Reading from the N-terminus, the 652-residue chain is Zinc finger protein 432 (652 aa).

Residues L8–P79 form the KRAB domain. 3'-nitrotyrosine is present on Y41. S139 and S164 each carry ADP-ribosylserine. 16 C2H2-type zinc fingers span residues H205–H227, Y233–H255, F261–H283, Y289–H311, Y317–H339, Y345–H367, Y373–H395, Y401–H423, Y429–H451, Y457–H479, Y485–H507, Y513–H535, F541–H563, K567–H591, Y597–H619, and F625–H647. At S246 the chain carries ADP-ribosylserine. S330 carries the ADP-ribosylserine modification. S414 carries the post-translational modification ADP-ribosylserine.

This sequence belongs to the krueppel C2H2-type zinc-finger protein family. In terms of assembly, interacts with PARP1 and several chromatin remodeling proteins; the interaction with PARP1 reshapes ZNF432 interacting proteins. Interacts with TRIM28; the interaction is independent of PARP1.

It localises to the nucleus. Functionally, homologous recombination repressor that functions as a poly(ADP-ribose) (PAR) reader regulating DNA damage response and PARP inhibition. Once recruited to DNA lesions via DNA-, in a PAR-dependent mechanism, stimulates PARP1 activity. Binds preferentially ssDNA and inhibits EXO1-mediated resection, probably through a PAR-independent DNA-binding mechanism. This Homo sapiens (Human) protein is Zinc finger protein 432.